We begin with the raw amino-acid sequence, 219 residues long: Asperlin biosynthesis cluster protein I (219 aa).

The disordered stretch occupies residues 97-124; sequence TGSSDNSPTATGIGAAGLTGDRPSSSGA. Residues 105–116 are compositionally biased toward low complexity; it reads TATGIGAAGLTG.

It participates in polyketide biosynthesis. Its function is as follows. Part of the gene cluster that mediates the biosynthesis of asperlin, a polyketide showing anti-inflammatory, antitumor and antibiotic activities. The first step of the asperlin biosynthesis is the production of the intermediate 2,4,6-octatrienoic acid by the highly redusing polyketide synthase alnA with cleavage of the PKS product by the esterase alnB. 2,4,6-octatrienoic acid is further converted to asperlin via several steps involving the remaining enzymes from the cluster. The chain is Asperlin biosynthesis cluster protein I from Emericella nidulans (strain FGSC A4 / ATCC 38163 / CBS 112.46 / NRRL 194 / M139) (Aspergillus nidulans).